A 440-amino-acid polypeptide reads, in one-letter code: Protein OSB3, chloroplastic/mitochondrial (440 aa).

The N-terminal 61 residues, 1–61 (MNLISRTLTR…AKVSVKPPLN (61 aa)), are a transit peptide targeting the chloroplast and mitochondrion. An SSB domain is found at 80-178 (ISNWINLIGF…VMVQNLNFVQ (99 aa)). PDF region stretches follow at residues 218–270 (WKHL…LKLE), 294–342 (WKDL…SKLP), and 380–428 (WKNL…SKLP).

As to expression, expressed primarily in the female gametophyte and in the floral abscission zone.

Its subcellular location is the mitochondrion. The protein resides in the plastid. The protein localises to the chloroplast. Its function is as follows. Binds single-stranded DNA. The protein is Protein OSB3, chloroplastic/mitochondrial (OSB3) of Arabidopsis thaliana (Mouse-ear cress).